We begin with the raw amino-acid sequence, 49 residues long: DNA-directed RNA polymerase subunit Rpo12 (49 aa).

Zn(2+) is bound by residues cysteine 11, cysteine 27, and cysteine 30.

This sequence belongs to the archaeal Rpo12/eukaryotic RPC10 RNA polymerase subunit family. In terms of assembly, part of the RNA polymerase complex. Zn(2+) serves as cofactor.

Its subcellular location is the cytoplasm. The protein resides in the chromosome. The catalysed reaction is RNA(n) + a ribonucleoside 5'-triphosphate = RNA(n+1) + diphosphate. Functionally, DNA-dependent RNA polymerase (RNAP) catalyzes the transcription of DNA into RNA using the four ribonucleoside triphosphates as substrates. The polypeptide is DNA-directed RNA polymerase subunit Rpo12 (Thermococcus kodakarensis (strain ATCC BAA-918 / JCM 12380 / KOD1) (Pyrococcus kodakaraensis (strain KOD1))).